A 172-amino-acid polypeptide reads, in one-letter code: UPF0102 protein Pcryo_2198 (172 aa).

This sequence belongs to the UPF0102 family.

This Psychrobacter cryohalolentis (strain ATCC BAA-1226 / DSM 17306 / VKM B-2378 / K5) protein is UPF0102 protein Pcryo_2198.